Consider the following 455-residue polypeptide: Chromosomal replication initiator protein DnaA 2 (455 aa).

Residues 1 to 95 form a domain I, interacts with DnaA modulators region; it reads MLTCNDCSTW…KRSSPQIAAS (95 aa). Positions 96–112 are domain II; sequence VTKPAVEVSEENKDFQL. The tract at residues 113–328 is domain III, AAA+ region; it reads KLNGAYRFDN…GAINKLTAYC (216 aa). ATP is bound by residues Gly157, Gly159, Lys160, and Thr161. The interval 329–455 is domain IV, binds dsDNA; that stretch reads LLFNKPLTET…IAIDSPQHFV (127 aa).

Belongs to the DnaA family. In terms of assembly, oligomerizes as a right-handed, spiral filament on DNA at oriC.

The protein resides in the cytoplasm. In terms of biological role, plays an essential role in the initiation and regulation of chromosomal replication. ATP-DnaA binds to the origin of replication (oriC) to initiate formation of the DNA replication initiation complex once per cell cycle. Binds the DnaA box (a 9 base pair repeat at the origin) and separates the double-stranded (ds)DNA. Forms a right-handed helical filament on oriC DNA; dsDNA binds to the exterior of the filament while single-stranded (ss)DNA is stabiized in the filament's interior. The ATP-DnaA-oriC complex binds and stabilizes one strand of the AT-rich DNA unwinding element (DUE), permitting loading of DNA polymerase. After initiation quickly degrades to an ADP-DnaA complex that is not apt for DNA replication. Binds acidic phospholipids. This Chlamydia muridarum (strain MoPn / Nigg) protein is Chromosomal replication initiator protein DnaA 2.